Consider the following 228-residue polypeptide: Ribonuclease 3 (228 aa).

Positions 5 to 127 (KDALQDRLGY…LFGAIYLDGG (123 aa)) constitute an RNase III domain. Glutamate 40 lines the Mg(2+) pocket. Aspartate 44 is an active-site residue. Residues aspartate 113 and glutamate 116 each coordinate Mg(2+). The active site involves glutamate 116. A DRBM domain is found at 154-224 (DPKTRLQEHL…AEQMLKRLED (71 aa)). Positions 200–228 (AEGEAGSRRKAEQQAAEQMLKRLEDKHER) are disordered. Over residues 218–228 (MLKRLEDKHER) the composition is skewed to basic and acidic residues.

Belongs to the ribonuclease III family. Homodimer. Mg(2+) is required as a cofactor.

The protein localises to the cytoplasm. The enzyme catalyses Endonucleolytic cleavage to 5'-phosphomonoester.. Digests double-stranded RNA. Involved in the processing of primary rRNA transcript to yield the immediate precursors to the large and small rRNAs (23S and 16S). Processes some mRNAs, and tRNAs when they are encoded in the rRNA operon. Processes pre-crRNA and tracrRNA of type II CRISPR loci if present in the organism. In Alkalilimnicola ehrlichii (strain ATCC BAA-1101 / DSM 17681 / MLHE-1), this protein is Ribonuclease 3.